Here is a 342-residue protein sequence, read N- to C-terminus: N-acetyl-gamma-glutamyl-phosphate reductase (342 aa).

Residue Cys146 is part of the active site.

The protein belongs to the NAGSA dehydrogenase family. Type 1 subfamily.

Its subcellular location is the cytoplasm. It catalyses the reaction N-acetyl-L-glutamate 5-semialdehyde + phosphate + NADP(+) = N-acetyl-L-glutamyl 5-phosphate + NADPH + H(+). The protein operates within amino-acid biosynthesis; L-arginine biosynthesis; N(2)-acetyl-L-ornithine from L-glutamate: step 3/4. In terms of biological role, catalyzes the NADPH-dependent reduction of N-acetyl-5-glutamyl phosphate to yield N-acetyl-L-glutamate 5-semialdehyde. This is N-acetyl-gamma-glutamyl-phosphate reductase from Thermobifida fusca (strain YX).